A 78-amino-acid polypeptide reads, in one-letter code: Metallothionein-like protein type 2 (78 aa).

Belongs to the metallothionein superfamily. Type 15 family.

Its function is as follows. Metallothioneins have a high content of cysteine residues that bind various heavy metals. The polypeptide is Metallothionein-like protein type 2 (Musa acuminata (Banana)).